We begin with the raw amino-acid sequence, 148 residues long: Large ribosomal subunit protein uL15 (148 aa).

Positions 1-30 are enriched in basic residues; sequence MPSKLRKTRKLRGHVSHGHGRIGKHRKHPG. A disordered region spans residues 1-38; sequence MPSKLRKTRKLRGHVSHGHGRIGKHRKHPGGRGNAGGM.

The protein belongs to the universal ribosomal protein uL15 family. As to quaternary structure, component of the large ribosomal subunit.

The protein resides in the cytoplasm. Component of the large ribosomal subunit. The ribosome is a large ribonucleoprotein complex responsible for the synthesis of proteins in the cell. This is Large ribosomal subunit protein uL15 (rpl27a) from Xenopus laevis (African clawed frog).